Consider the following 537-residue polypeptide: Organic anion transporter 3 (537 aa).

The Cytoplasmic portion of the chain corresponds to 1–11 (MTFSEILDRVG). S4 carries the phosphoserine modification. Residues 12-32 (SMGPFQYLHVTLLALPILGIA) form a helical membrane-spanning segment. At 33–123 (NHNLLQIFTA…LVCGSNKLKE (91 aa)) the chain is on the extracellular side. N-linked (GlcNAc...) asparagine glycosylation occurs at N81. The helical transmembrane segment at 124–144 (MAQSVFMAGILVGGPVFGELS) threads the bilayer. Topologically, residues 145–150 (DRFGRK) are cytoplasmic. A helical transmembrane segment spans residues 151-171 (PILTWSYLLLAASGSSAAFSP). Residues 172-176 (SLTVY) are Extracellular-facing. Residues 177 to 197 (MIFRFLCGCSISGISLSTIIL) traverse the membrane as a helical segment. Residues 198-212 (NVEWVPTSTRAISST) are Cytoplasmic-facing. Residues 213–233 (TIGYCYTIGQFILPGLAYAVP) form a helical membrane-spanning segment. The Extracellular segment spans residues 234–236 (QWR). The helical transmembrane segment at 237 to 257 (WLQLSVSAAFFIFSLLSWWVP) threads the bilayer. At 258-327 (ESIRWLVLSG…FRVSILRRVT (70 aa)) the chain is on the cytoplasmic side. Residues 328–348 (FCLSLAWFATGFAYYSLAMGV) form a helical membrane-spanning segment. At 349–354 (EEFGVN) the chain is on the extracellular side. The helical transmembrane segment at 355–375 (IYILQIIFGGVDIPAKFITIL) threads the bilayer. Residues 376–383 (SISYLGRR) lie on the Cytoplasmic side of the membrane. The chain crosses the membrane as a helical span at residues 384-404 (ITQGFLLILAGVAILALIFVS). The Extracellular segment spans residues 405 to 411 (SEMQLLR). The chain crosses the membrane as a helical span at residues 412–432 (TALAVFGKGCLSGSFSCLFLY). The Cytoplasmic portion of the chain corresponds to 433–471 (TSELYPTVLRQTGMGISNIWARVGSMIAPLVKITGELQP). A helical transmembrane segment spans residues 472 to 492 (FIPNVIFGTMTLLGGSAAFFL). Over 493 to 537 (LETLNRPLPETIEDIQDWYQQTKKTKQEPEAEKASQTIPLKTGGP) the chain is Extracellular. The tract at residues 513-537 (QTKKTKQEPEAEKASQTIPLKTGGP) is disordered.

It belongs to the major facilitator (TC 2.A.1) superfamily. Organic cation transporter (TC 2.A.1.19) family. In terms of tissue distribution, expressed mainly in kidney. In kidney, detected in almost all parts of the nephron, including macula densa cells. Expressed (at protein level) throughout the renal cortex. Widely distributed in the brain with no large regional differences. Expressed in the choroid plexus (CP, located in the ventricles of the brain). Expressed in developing bone. Weakly expressed in brain and eye.

It localises to the basolateral cell membrane. The catalysed reaction is estrone 3-sulfate(out) + glutarate(in) = estrone 3-sulfate(in) + glutarate(out). The enzyme catalyses estrone 3-sulfate(in) + 2-oxoglutarate(out) = estrone 3-sulfate(out) + 2-oxoglutarate(in). It carries out the reaction taurocholate(out) + glutarate(in) = taurocholate(in) + glutarate(out). It catalyses the reaction dehydroepiandrosterone 3-sulfate(out) + glutarate(in) = dehydroepiandrosterone 3-sulfate(in) + glutarate(out). The catalysed reaction is glutarate(in) + 2-oxoglutarate(out) = glutarate(out) + 2-oxoglutarate(in). The enzyme catalyses urate(in) + 2-oxoglutarate(out) = urate(out) + 2-oxoglutarate(in). It carries out the reaction prostaglandin F2alpha(out) + glutarate(in) = prostaglandin F2alpha(in) + glutarate(out). It catalyses the reaction prostaglandin F2alpha(out) + 2-oxoglutarate(in) = prostaglandin F2alpha(in) + 2-oxoglutarate(out). The catalysed reaction is (R)-carnitine(out) + 2-oxoglutarate(in) = (R)-carnitine(in) + 2-oxoglutarate(out). The enzyme catalyses glutarate(in) + (R)-carnitine(out) = glutarate(out) + (R)-carnitine(in). It carries out the reaction prostaglandin E2(out) + 2-oxoglutarate(in) = prostaglandin E2(in) + 2-oxoglutarate(out). It catalyses the reaction prostaglandin E2(out) + glutarate(in) = prostaglandin E2(in) + glutarate(out). The catalysed reaction is urate(in) + glutarate(out) = urate(out) + glutarate(in). The enzyme catalyses taurocholate(out) + 2-oxoglutarate(in) = taurocholate(in) + 2-oxoglutarate(out). It carries out the reaction dehydroepiandrosterone 3-sulfate(out) + 2-oxoglutarate(in) = dehydroepiandrosterone 3-sulfate(in) + 2-oxoglutarate(out). It catalyses the reaction kynurenate(out) + a dicarboxylate(in) = kynurenate(in) + a dicarboxylate(out). The catalysed reaction is (indol-3-yl)acetate(out) + a dicarboxylate(in) = (indol-3-yl)acetate(in) + a dicarboxylate(out). The enzyme catalyses indoxyl sulfate(out) + a dicarboxylate(in) = indoxyl sulfate(in) + a dicarboxylate(out). It carries out the reaction N-benzoylglycine(out) + a dicarboxylate(in) = N-benzoylglycine(in) + a dicarboxylate(out). It catalyses the reaction 3-carboxy-4-methyl-5-propyl-2-furanpropanoate(out) + a dicarboxylate(in) = 3-carboxy-4-methyl-5-propyl-2-furanpropanoate(in) + a dicarboxylate(out). The catalysed reaction is (6R)-L-erythro-5,6,7,8-tetrahydrobiopterin(out) + a dicarboxylate(in) = (6R)-L-erythro-5,6,7,8-tetrahydrobiopterin(in) + a dicarboxylate(out). The enzyme catalyses L-erythro-7,8-dihydrobiopterin(out) + a dicarboxylate(in) = L-erythro-7,8-dihydrobiopterin(in) + a dicarboxylate(out). It carries out the reaction L-sepiapterin(out) + a dicarboxylate(in) = L-sepiapterin(in) + a dicarboxylate(out). Its activity is regulated as follows. Expression inhibited by androgens such as testosterone. Functions as an organic anion/dicarboxylate exchanger that couples organic anion uptake indirectly to the sodium gradient. Transports organic anions such as estrone 3-sulfate (E1S) and urate in exchange for dicarboxylates such as glutarate or ketoglutarate (2-oxoglutarate). Plays an important role in the excretion of endogenous and exogenous organic anions, especially from the kidney and the brain. E1S transport is pH- and chloride-dependent and may also involve E1S/cGMP exchange. Responsible for the transport of prostaglandin E2 (PGE2) and prostaglandin F2(alpha) (PGF2(alpha)) in the basolateral side of the renal tubule. Involved in the transport of neuroactive tryptophan metabolites kynurenate and xanthurenate. Functions as a biopterin transporters involved in the uptake and the secretion of coenzymes tetrahydrobiopterin (BH4), dihydrobiopterin (BH2) and sepiapterin to urine, thereby determining baseline levels of blood biopterins. May be involved in the basolateral transport of steviol, a metabolite of the popular sugar substitute stevioside. May participate in the detoxification/ renal excretion of drugs and xenobiotics, such as the histamine H(2)-receptor antagonists fexofenadine and cimetidine, the antibiotic benzylpenicillin (PCG), the anionic herbicide 2,4-dichloro-phenoxyacetate (2,4-D), the diagnostic agent p-aminohippurate (PAH), the antiviral acyclovir (ACV), and the mycotoxin ochratoxin (OTA), by transporting these exogenous organic anions across the cell membrane in exchange for dicarboxylates such as 2-oxoglutarate. May contribute to the release of cortisol in the adrenals. Involved in one of the detoxification systems on the choroid plexus (CP), removes substrates such as E1S or taurocholate (TC), PCG, 2,4-D and PAH, from the cerebrospinal fluid (CSF) to the blood for eventual excretion in urine and bile. Also contributes to the uptake of several other organic compounds such as the prostanoids prostaglandin E(2) and prostaglandin F(2-alpha), L-carnitine, and the therapeutic drugs allopurinol, 6-mercaptopurine (6-MP) and 5-fluorouracil (5-FU). Mediates the transport of PAH, PCG, and the statins pravastatin and pitavastatin, from the cerebrum into the blood circulation across the blood-brain barrier (BBB). Contributes to the renal uptake of potent uremic toxins (indoxyl sulfate (IS), indole acetate (IA), hippurate/N-benzoylglycine (HA) and 3-carboxy-4-methyl-5-propyl-2-furanpropionate (CMPF)), pravastatin, PCG, E1S and dehydroepiandrosterone sulfate (DHEAS), and is partly involved in the renal uptake of temocaprilat (an angiotensin-converting enzyme (ACE) inhibitor). In summary, plays a role in the efflux of drugs and xenobiotics, helping reduce their undesired toxicological effects on the body. The sequence is that of Organic anion transporter 3 (Slc22a8) from Mus musculus (Mouse).